A 499-amino-acid chain; its full sequence is Aspartyl/glutamyl-tRNA(Asn/Gln) amidotransferase subunit B (499 aa).

This sequence belongs to the GatB/GatE family. GatB subfamily. As to quaternary structure, heterotrimer of A, B and C subunits.

It carries out the reaction L-glutamyl-tRNA(Gln) + L-glutamine + ATP + H2O = L-glutaminyl-tRNA(Gln) + L-glutamate + ADP + phosphate + H(+). It catalyses the reaction L-aspartyl-tRNA(Asn) + L-glutamine + ATP + H2O = L-asparaginyl-tRNA(Asn) + L-glutamate + ADP + phosphate + 2 H(+). Allows the formation of correctly charged Asn-tRNA(Asn) or Gln-tRNA(Gln) through the transamidation of misacylated Asp-tRNA(Asn) or Glu-tRNA(Gln) in organisms which lack either or both of asparaginyl-tRNA or glutaminyl-tRNA synthetases. The reaction takes place in the presence of glutamine and ATP through an activated phospho-Asp-tRNA(Asn) or phospho-Glu-tRNA(Gln). This chain is Aspartyl/glutamyl-tRNA(Asn/Gln) amidotransferase subunit B, found in Salinispora tropica (strain ATCC BAA-916 / DSM 44818 / JCM 13857 / NBRC 105044 / CNB-440).